We begin with the raw amino-acid sequence, 340 residues long: MASTTPSTYKQAVFKEQGAGLTLEEVALTLPKRDEILVKVEACGVCHSDHFAQTNLMGGGFPLVPGHEIIGRVAAVGEGETVWKEGDRIGGAWHGGHDGTCGACKKGFFQMCDNEQVNGISRNGGYAEYCIIRREAAVHIPDHVNAAKYAPMLCAGVTVFNAMRHMKIPPGELVAIQGLGGLGHLALQYANKFGYRVVALSRDSTKEEFARKLGAHEYIDTSREDPVAALQKLGGASLIVSTAPVPEIINPLIQGLGVMGKLLILSIVGGIEVHTGLLVGKGKSIWSWPSGHATDSEDAIAFADLHGIDCLIEEFPLDKCNEAFAAMMEGSVRFRAVITM.

Residue C46 participates in Zn(2+) binding. NAD(+) is bound at residue H47. H67, E68, C101, C104, C112, and C154 together coordinate Zn(2+). H67 lines the substrate pocket. NAD(+)-binding positions include 178-183, 198-203, K206, 265-267, 289-291, and 297-299; these read GLGGLG, VALSRD, LSI, PSG, and EDA.

The protein belongs to the zinc-containing alcohol dehydrogenase family. Requires Zn(2+) as cofactor.

It localises to the cytoplasm. The protein localises to the cytosol. The enzyme catalyses neopatulin + NADPH + H(+) = (E)-ascladiol + NADP(+). The protein operates within mycotoxin biosynthesis; patulin biosynthesis. Alcohol dehydrogenase; part of the gene cluster that mediates the biosynthesis of patulin, an acetate-derived tetraketide mycotoxin produced by several fungal species that shows antimicrobial properties against several bacteria. PatD catalyzes the conversion of neopatulin into E-ascladiol. The pathway begins with the synthesis of 6-methylsalicylic acid by the polyketide synthase (PKS) patK via condensation of acetate and malonate units. The 6-methylsalicylic acid decarboxylase patG then catalyzes the decarboxylation of 6-methylsalicylic acid to yield m-cresol (also known as 3-methylphenol). These first reactions occur in the cytosol. The intermediate m-cresol is then transported into the endoplasmic reticulum where the cytochrome P450 monooxygenase patH converts it to m-hydroxybenzyl alcohol, which is further converted to gentisyl alcohol by the cytochrome P450 monooxygenase patI. The oxidoreductases patJ and patO further convert gentisyl alcohol to isoepoxydon in the vacuole. PatN catalyzes then the transformation of isoepoxydon into phyllostine. The cluster protein patF is responsible for the conversion from phyllostine to neopatulin whereas the alcohol dehydrogenase patD converts neopatulin to E-ascladiol. The steps between isoepoxydon and E-ascladiol occur in the cytosol, and E-ascladiol is probably secreted to the extracellular space by one of the cluster-specific transporters patC or patM. Finally, the secreted patulin synthase patE catalyzes the conversion of E-ascladiol to patulin. The chain is Alcohol dehydrogenase patD from Penicillium expansum (Blue mold rot fungus).